We begin with the raw amino-acid sequence, 309 residues long: Cytochrome c biogenesis protein CcsA (309 aa).

The next 8 membrane-spanning stretches (helical) occupy residues 18-38 (LGLL…GAVF), 48-68 (LITI…WSIS), 73-93 (ISNL…GQLL), 102-122 (IIPS…CFVL), 148-168 (VMLS…VLFI), 216-236 (SILV…VWAN), 250-267 (TWAF…HMRI), and 279-299 (LAST…FLGI).

Belongs to the CcmF/CycK/Ccl1/NrfE/CcsA family. As to quaternary structure, may interact with ccs1.

It localises to the cellular thylakoid membrane. In terms of biological role, required during biogenesis of c-type cytochromes (cytochrome c6 and cytochrome f) at the step of heme attachment. This chain is Cytochrome c biogenesis protein CcsA, found in Prochlorococcus marinus (strain AS9601).